The chain runs to 240 residues: PF03932 family protein CutC (240 aa).

The protein belongs to the CutC family.

The protein resides in the cytoplasm. The polypeptide is PF03932 family protein CutC (Xanthomonas campestris pv. campestris (strain 8004)).